The following is a 585-amino-acid chain: Glycerol-3-phosphate acyltransferase 1 (585 aa).

The next 3 helical transmembrane spans lie at 126 to 146, 334 to 354, and 356 to 376; these read FFPY…AILL, TPLA…LAVF, and ISVG…MSGV. The HXXXXD motif signature appears at 403–408; that stretch reads HRTLLD.

It belongs to the GPAT/DAPAT family. Highly expressed in developing siliques and flower buds. Weakly or not expressed in roots, seedlings and leaves.

It is found in the membrane. The protein localises to the mitochondrion. It carries out the reaction sn-glycerol 3-phosphate + an acyl-CoA = a 1-acyl-sn-glycero-3-phosphate + CoA. It participates in phospholipid metabolism; CDP-diacylglycerol biosynthesis; CDP-diacylglycerol from sn-glycerol 3-phosphate: step 1/3. Its function is as follows. Esterifies acyl-group from acyl-ACP to the sn-1 position of glycerol-3-phosphate, an essential step in glycerolipid biosynthesis. Involved in pollen development, by being required for tapetum differentiation and male fertility. In addition to the sporophytic effect, it also exerts a gametophytic effect on pollen performance. The chain is Glycerol-3-phosphate acyltransferase 1 (GPAT1) from Arabidopsis thaliana (Mouse-ear cress).